Here is a 452-residue protein sequence, read N- to C-terminus: DNA primase DnaG (452 aa).

The Toprim domain occupies 172 to 248 (DTVIIVEGRA…DIDYIARAPP (77 aa)). Mg(2+) is bound by residues glutamate 178, aspartate 222, and aspartate 224. The tract at residues 289 to 320 (KKQIEQAQVQPSAAPTSPQPQPESTQPTQPIQ) is disordered. The segment covering 294–320 (QAQVQPSAAPTSPQPQPESTQPTQPIQ) has biased composition (low complexity).

It belongs to the archaeal DnaG primase family. Forms a ternary complex with MCM helicase and DNA. Component of the archaeal exosome complex. Requires Mg(2+) as cofactor.

It carries out the reaction ssDNA + n NTP = ssDNA/pppN(pN)n-1 hybrid + (n-1) diphosphate.. RNA polymerase that catalyzes the synthesis of short RNA molecules used as primers for DNA polymerase during DNA replication. Also part of the exosome, which is a complex involved in RNA degradation. Acts as a poly(A)-binding protein that enhances the interaction between heteromeric, adenine-rich transcripts and the exosome. The chain is DNA primase DnaG from Caldivirga maquilingensis (strain ATCC 700844 / DSM 13496 / JCM 10307 / IC-167).